A 779-amino-acid polypeptide reads, in one-letter code: Lon protease (779 aa).

One can recognise a Lon N-terminal domain in the interval 10 to 203 (LPLLPLRGLL…ILLTILNNER (194 aa)). Position 355–362 (355–362 (GPPGVGKT)) interacts with ATP. Residues 591 to 772 (KDQVGSVTGL…DEVLRHALTK (182 aa)) form the Lon proteolytic domain. Catalysis depends on residues serine 678 and lysine 721.

It belongs to the peptidase S16 family. Homohexamer. Organized in a ring with a central cavity.

It localises to the cytoplasm. It catalyses the reaction Hydrolysis of proteins in presence of ATP.. Its function is as follows. ATP-dependent serine protease that mediates the selective degradation of mutant and abnormal proteins as well as certain short-lived regulatory proteins. Required for cellular homeostasis and for survival from DNA damage and developmental changes induced by stress. Degrades polypeptides processively to yield small peptide fragments that are 5 to 10 amino acids long. Binds to DNA in a double-stranded, site-specific manner. This chain is Lon protease, found in Brevibacillus choshinensis.